A 299-amino-acid chain; its full sequence is Protein charybde (299 aa).

The disordered stretch occupies residues 73-103; it reads LNTRPSATPPSAGGGGPLAGGGSVGMTTPKQ. Positions 84 to 96 are enriched in gly residues; the sequence is AGGGGPLAGGGSV.

Belongs to the DDIT4 family.

The protein resides in the cytoplasm. Inhibits cell growth by regulating the Tor pathway upstream of the Tsc1-Tsc2 complex and downstream of Akt1. Acts as a cell death activator during head development. The protein is Protein charybde (chrb) of Drosophila melanogaster (Fruit fly).